The sequence spans 827 residues: 6-phosphofructo-2-kinase 1 (827 aa).

2 disordered regions span residues 1–97 and 149–175; these read MFKP…ENSA and TRHH…DGLI. Residues 31 to 41 are compositionally biased toward low complexity; sequence SQDSSYDLLSR. The span at 42 to 59 shows a compositional bias: basic and acidic residues; that stretch reads SSDDKIDAEKGPHDELSK. Residues 72–97 are compositionally biased toward polar residues; the sequence is TPISSNWNSPGITEENTPSDSPENSA. Position 92 is a phosphoserine (serine 92). Threonine 157 is modified (phosphothreonine). Position 190–197 (190–197) interacts with ATP; it reads GLPATGKS. Active-site residues include aspartate 277 and cysteine 309. Arginine 343 lines the beta-D-fructose 6-phosphate pocket. Serine 404 functions as the Phosphoserine intermediate in the catalytic mechanism. The active site involves glutamate 497. Histidine 565 serves as the catalytic Proton donor. Serine 644, serine 652, serine 659, and serine 667 each carry phosphoserine. 2 disordered regions span residues 649 to 704 and 799 to 827; these read APPS…SNFN and HGKD…QSHV. The segment covering 671–682 has biased composition (low complexity); the sequence is SASSSQSELSEQ. Residues 683 to 704 are compositionally biased toward polar residues; the sequence is PKNSVSAQTGSNNTTLIGSNFN.

The enzyme catalyses beta-D-fructose 6-phosphate + ATP = beta-D-fructose 2,6-bisphosphate + ADP + H(+). Its activity is regulated as follows. Phosphorylation results in the activation of the kinase activity. Functionally, synthesis of fructose 2,6-bisphosphate. The polypeptide is 6-phosphofructo-2-kinase 1 (PFK26) (Saccharomyces cerevisiae (strain ATCC 204508 / S288c) (Baker's yeast)).